Here is a 309-residue protein sequence, read N- to C-terminus: MGKWKVGTRRSKLALTQTNWVVDKLKGFAPEADFELHEIVTKGDRILDVTLSKVGGKGLFVKEIEQSLFDKETDFAVHSLKDMPAELPDGLVIGAIPKRVDPRDVLLSKDGKTLDELPQGALVGTSSLRRSSQILAYRPDIQIESLRGNIDTRMRKLAEGNFDAIILAAAGLERVNFEGEISQFLPVEISLPAVGQGALAIECRADDEETLALLKQFDDAPTRLAVSAERSFLHKLQGGCQVPIGAYATVGENNEITLTGMVGSPDGKQMFKNTATGQDPLALGIQVAEALLAQGAGDVLAEVLRENEQ.

Position 240 is an S-(dipyrrolylmethanemethyl)cysteine (C240).

The protein belongs to the HMBS family. In terms of assembly, monomer. It depends on dipyrromethane as a cofactor.

It catalyses the reaction 4 porphobilinogen + H2O = hydroxymethylbilane + 4 NH4(+). Its pathway is porphyrin-containing compound metabolism; protoporphyrin-IX biosynthesis; coproporphyrinogen-III from 5-aminolevulinate: step 2/4. Its function is as follows. Tetrapolymerization of the monopyrrole PBG into the hydroxymethylbilane pre-uroporphyrinogen in several discrete steps. This is Porphobilinogen deaminase from Brevibacillus brevis (strain 47 / JCM 6285 / NBRC 100599).